We begin with the raw amino-acid sequence, 370 residues long: Mitogen-activated protein kinase 3 (370 aa).

The 288-residue stretch at 32 to 319 folds into the Protein kinase domain; that stretch reads YVPIKPIGRG…VTEALEHPYM (288 aa). Residues 38–46 and Lys61 each bind ATP; that span reads IGRGAYGIV. Catalysis depends on Asp158, which acts as the Proton acceptor. Thr191 carries the post-translational modification Phosphothreonine. The TXY signature appears at 191–193; sequence TEY. Position 193 is a phosphotyrosine (Tyr193).

The protein belongs to the protein kinase superfamily. CMGC Ser/Thr protein kinase family. MAP kinase subfamily. Post-translationally, dually phosphorylated on Thr-191 and Tyr-193, which activates the enzyme.

It catalyses the reaction L-seryl-[protein] + ATP = O-phospho-L-seryl-[protein] + ADP + H(+). It carries out the reaction L-threonyl-[protein] + ATP = O-phospho-L-threonyl-[protein] + ADP + H(+). Its activity is regulated as follows. Activated by threonine and tyrosine phosphorylation. The sequence is that of Mitogen-activated protein kinase 3 (MPK3) from Oryza sativa subsp. japonica (Rice).